Here is an 815-residue protein sequence, read N- to C-terminus: (-)-kolavenyl diphosphate synthase TPS10, chloroplastic (815 aa).

The N-terminal 50 residues, 1-50 (MFMSSSSSSHARRPQLSSFSYLHPPLPFPGLSFSSTRDKRVNFDSTRIIS), are a transit peptide targeting the chloroplast. Position 247 (K247) interacts with substrate. Mg(2+)-binding residues include D379 and D381. Positions 379–382 (DIDD) match the DXDD motif motif. K465 serves as a coordination point for substrate.

The protein belongs to the terpene synthase family. Tpsc subfamily. Requires Mg(2+) as cofactor.

The protein resides in the plastid. Its subcellular location is the chloroplast. The catalysed reaction is (2E,6E,10E)-geranylgeranyl diphosphate = (-)-kolavenyl diphosphate. With respect to regulation, inhibited by high concentrations of magnesium. In terms of biological role, diterpene synthase that catalyzes the formation of (-)-kolavenyl diphosphate from geranylgeranyl diphosphate (GGPP). This chain is (-)-kolavenyl diphosphate synthase TPS10, chloroplastic, found in Tripterygium wilfordii (Thunder God vine).